The sequence spans 405 residues: Beta-citrylglutamate synthase B (405 aa).

The ATP-grasp domain maps to phenylalanine 115–leucine 300. ATP contacts are provided by residues lysine 154, glutamine 189–aspartate 199, and arginine 215. The Mg(2+) site is built by aspartate 260, glutamate 273, and asparagine 275. Positions 260, 273, and 275 each coordinate Mn(2+). The interval alanine 359–asparagine 387 is disordered. Over residues methionine 360–glutamate 371 the composition is skewed to low complexity.

It belongs to the RimK family. Mg(2+) is required as a cofactor. It depends on Mn(2+) as a cofactor.

It is found in the cytoplasm. It catalyses the reaction citrate + L-glutamate + ATP = beta-citrylglutamate + ADP + phosphate + H(+). The enzyme catalyses N-acetyl-L-aspartate + L-glutamate + ATP = N-acetyl-L-aspartyl-L-glutamate + ADP + phosphate + H(+). Its function is as follows. Catalyzes the synthesis of beta-citryl-L-glutamate and N-acetyl-L-aspartyl-L-glutamate. Beta-citryl-L-glutamate is synthesized more efficiently than N-acetyl-L-aspartyl-L-glutamate. This Danio rerio (Zebrafish) protein is Beta-citrylglutamate synthase B (rimklb).